Here is a 271-residue protein sequence, read N- to C-terminus: 3-methyl-2-oxobutanoate hydroxymethyltransferase (271 aa).

2 residues coordinate Mg(2+): D49 and D88. Residues 49-50 (DS), D88, and K118 each bind 3-methyl-2-oxobutanoate. E120 serves as a coordination point for Mg(2+). The Proton acceptor role is filled by E187.

It belongs to the PanB family. Homodecamer; pentamer of dimers. Mg(2+) serves as cofactor.

It is found in the cytoplasm. It catalyses the reaction 3-methyl-2-oxobutanoate + (6R)-5,10-methylene-5,6,7,8-tetrahydrofolate + H2O = 2-dehydropantoate + (6S)-5,6,7,8-tetrahydrofolate. Its pathway is cofactor biosynthesis; (R)-pantothenate biosynthesis; (R)-pantoate from 3-methyl-2-oxobutanoate: step 1/2. In terms of biological role, catalyzes the reversible reaction in which hydroxymethyl group from 5,10-methylenetetrahydrofolate is transferred onto alpha-ketoisovalerate to form ketopantoate. The chain is 3-methyl-2-oxobutanoate hydroxymethyltransferase from Bartonella tribocorum (strain CIP 105476 / IBS 506).